We begin with the raw amino-acid sequence, 328 residues long: UPF0285 protein Mevan_1551 (328 aa).

The protein belongs to the UPF0285 family.

This chain is UPF0285 protein Mevan_1551, found in Methanococcus vannielii (strain ATCC 35089 / DSM 1224 / JCM 13029 / OCM 148 / SB).